Reading from the N-terminus, the 207-residue chain is Outer-membrane lipoprotein LolB (207 aa).

A signal peptide spans 1–23 (MINLRRFTKFTLAGLTALSLLGG). A lipid anchor (N-palmitoyl cysteine) is attached at Cys-24. The S-diacylglycerol cysteine moiety is linked to residue Cys-24.

This sequence belongs to the LolB family. In terms of assembly, monomer.

It is found in the cell outer membrane. Functionally, plays a critical role in the incorporation of lipoproteins in the outer membrane after they are released by the LolA protein. The protein is Outer-membrane lipoprotein LolB of Shewanella amazonensis (strain ATCC BAA-1098 / SB2B).